The primary structure comprises 424 residues: Histidine--tRNA ligase (424 aa).

It belongs to the class-II aminoacyl-tRNA synthetase family. Homodimer.

It is found in the cytoplasm. The catalysed reaction is tRNA(His) + L-histidine + ATP = L-histidyl-tRNA(His) + AMP + diphosphate + H(+). This Bacillus licheniformis (strain ATCC 14580 / DSM 13 / JCM 2505 / CCUG 7422 / NBRC 12200 / NCIMB 9375 / NCTC 10341 / NRRL NRS-1264 / Gibson 46) protein is Histidine--tRNA ligase.